We begin with the raw amino-acid sequence, 415 residues long: Gamma-glutamyl phosphate reductase (415 aa).

It belongs to the gamma-glutamyl phosphate reductase family.

Its subcellular location is the cytoplasm. It carries out the reaction L-glutamate 5-semialdehyde + phosphate + NADP(+) = L-glutamyl 5-phosphate + NADPH + H(+). It participates in amino-acid biosynthesis; L-proline biosynthesis; L-glutamate 5-semialdehyde from L-glutamate: step 2/2. In terms of biological role, catalyzes the NADPH-dependent reduction of L-glutamate 5-phosphate into L-glutamate 5-semialdehyde and phosphate. The product spontaneously undergoes cyclization to form 1-pyrroline-5-carboxylate. This is Gamma-glutamyl phosphate reductase from Bacillus cereus (strain AH187).